The sequence spans 488 residues: Auxin transporter-like protein 1 (488 aa).

Positions 1–36 (MSGEKQAEESIVVSGEDEVAGRKVEDSAAEEDIDGN) are disordered. The Cytoplasmic segment spans residues 1 to 64 (MSGEKQAEES…DAWFSCASNQ (64 aa)). The helical transmembrane segment at 65–82 (VAQVLLTLPYSFSQLGML) threads the bilayer. The Extracellular portion of the chain corresponds to 83–84 (SG). A helical transmembrane segment spans residues 85–105 (ILLQIFYGLMGSWTAYLISVL). The Cytoplasmic segment spans residues 106–141 (YVEYRARMEKQEAKSFKNHVIQWFEVLDGLLGPYWK). Residues 142–162 (AAGLAFNCTFLLFGSVIQLIA) traverse the membrane as a helical segment. At 163 to 178 (CASNIYYINDRLDKRT) the chain is on the extracellular side. Residues 179-199 (WTYIFGACCATTVFIPSFHNY) traverse the membrane as a helical segment. The Cytoplasmic segment spans residues 200–202 (RIW). The helical transmembrane segment at 203–223 (SFLGLGMTTYTAWYLTIASFL) threads the bilayer. Residues 224–238 (HGQAEGVTHSGPTKL) lie on the Extracellular side of the membrane. Residues 239–259 (VLYFTGATNILYTFGGHAVTV) traverse the membrane as a helical segment. Over 260–273 (EIMHAMWKPRKFKS) the chain is Cytoplasmic. The chain crosses the membrane as a helical span at residues 274-294 (IYLMATLYVFTLTLPSASAVY). Over 295 to 320 (WAFGDQLLNHSNAFSLLPKTRFRDTA) the chain is Extracellular. Asn303 carries an N-linked (GlcNAc...) asparagine glycan. The helical transmembrane segment at 321–341 (VILMLIHQFITFGFACTPLYF) threads the bilayer. The Cytoplasmic portion of the chain corresponds to 342–362 (VWEKAIGMHHTKSLCLRALVR). A helical transmembrane segment spans residues 363–383 (LPVVVPIWFLAIIFPFFGPIN). Residue Ser384 is a topological domain, extracellular. The helical transmembrane segment at 385 to 405 (AVGALLVTFTVYIIPALAHML) threads the bilayer. The Cytoplasmic segment spans residues 406-427 (TYRTASARRNAAEKPPFFIPSW). Residues 428–448 (AGVYVINAFIVVWVLVLGFGF) traverse the membrane as a helical segment. The Extracellular portion of the chain corresponds to 449-488 (GGWASMTNFIRQIDTFGLFAKCYQCKPPPAPIAAGAHHRR).

It belongs to the amino acid/polyamine transporter 2 family. Amino acid/auxin permease (AAAP) (TC 2.A.18.1) subfamily.

It is found in the cell membrane. Its function is as follows. Carrier protein involved in proton-driven auxin influx. Mediates the formation of auxin gradient from developing leaves (site of auxin biosynthesis) to tips by contributing to the loading of auxin in vascular tissues and facilitating acropetal (base to tip) auxin transport within inner tissues of the root apex, and basipetal (tip to base) auxin transport within outer tissues of the root apex. This Arabidopsis thaliana (Mouse-ear cress) protein is Auxin transporter-like protein 1 (LAX1).